Reading from the N-terminus, the 356-residue chain is tRNA-splicing endonuclease subunit SEN2 (356 aa).

Active-site residues include Tyr268, His276, and Lys307.

The protein belongs to the tRNA-intron endonuclease family. Heterotetramer composed of SEN2, SEN15, SEN34 and SEN54. Interacts directly with SEN54.

The catalysed reaction is pretRNA = a 3'-half-tRNA molecule with a 5'-OH end + a 5'-half-tRNA molecule with a 2',3'-cyclic phosphate end + an intron with a 2',3'-cyclic phosphate and a 5'-hydroxyl terminus.. Constitutes one of the two catalytic subunit of the tRNA-splicing endonuclease complex, a complex responsible for identification and cleavage of the splice sites in pre-tRNA. It cleaves pre-tRNA at the 5'- and 3'-splice sites to release the intron. The products are an intron and two tRNA half-molecules bearing 2',3'-cyclic phosphate and 5'-OH termini. There are no conserved sequences at the splice sites, but the intron is invariably located at the same site in the gene, placing the splice sites an invariant distance from the constant structural features of the tRNA body. This subunit may anchor the endonuclease complex to the nuclear membrane. Probably carries the active site for 5'-splice site cleavage. In Eremothecium gossypii (strain ATCC 10895 / CBS 109.51 / FGSC 9923 / NRRL Y-1056) (Yeast), this protein is tRNA-splicing endonuclease subunit SEN2 (SEN2).